Consider the following 616-residue polypeptide: Homeodomain-interacting protein kinase 4 (616 aa).

Residues Tyr11 to Val347 enclose the Protein kinase domain. ATP-binding positions include Leu17–Val25 and Lys40. The Proton acceptor role is filled by Asp136. The disordered stretch occupies residues His487 to His616. Over residues Lys497–Ser512 the composition is skewed to polar residues. Position 512 is a phosphoserine (Ser512). Residues Arg542–Gly560 show a composition bias toward basic and acidic residues.

This sequence belongs to the protein kinase superfamily. CMGC Ser/Thr protein kinase family. HIPK subfamily. Autophosphorylated.

It localises to the cytoplasm. The catalysed reaction is L-seryl-[protein] + ATP = O-phospho-L-seryl-[protein] + ADP + H(+). It carries out the reaction L-threonyl-[protein] + ATP = O-phospho-L-threonyl-[protein] + ADP + H(+). Its function is as follows. Protein kinase that phosphorylates TP53, and thus induces TP53 repression of BIRC5 promoter. May act as a corepressor of transcription factors (Potential). This chain is Homeodomain-interacting protein kinase 4 (Hipk4), found in Rattus norvegicus (Rat).